The sequence spans 408 residues: CinA-like protein (408 aa).

It belongs to the CinA family.

The polypeptide is CinA-like protein (Fervidobacterium nodosum (strain ATCC 35602 / DSM 5306 / Rt17-B1)).